The following is a 214-amino-acid chain: Probable transaldolase (214 aa).

Residue Lys-83 is the Schiff-base intermediate with substrate of the active site.

The protein belongs to the transaldolase family. Type 3B subfamily.

Its subcellular location is the cytoplasm. It catalyses the reaction D-sedoheptulose 7-phosphate + D-glyceraldehyde 3-phosphate = D-erythrose 4-phosphate + beta-D-fructose 6-phosphate. It functions in the pathway carbohydrate degradation; pentose phosphate pathway; D-glyceraldehyde 3-phosphate and beta-D-fructose 6-phosphate from D-ribose 5-phosphate and D-xylulose 5-phosphate (non-oxidative stage): step 2/3. Its function is as follows. Transaldolase is important for the balance of metabolites in the pentose-phosphate pathway. The sequence is that of Probable transaldolase (tal) from Streptococcus pyogenes serotype M1.